An 89-amino-acid polypeptide reads, in one-letter code: ATP synthase subunit c, sodium ion specific (89 aa).

Transmembrane regions (helical) follow at residues 9-29 (VVLA…IGPG) and 68-88 (GIYS…VGLL).

This sequence belongs to the ATPase C chain family. F-type ATPases have 2 components, F(1) - the catalytic core - and F(0) - the membrane sodium channel. F(1) has five subunits: alpha(3), beta(3), gamma(1), delta(1), epsilon(1). F(0) has three main subunits: a(1), b(2) and c(10-14). The alpha and beta chains form an alternating ring which encloses part of the gamma chain. F(1) is attached to F(0) by a central stalk formed by the gamma and epsilon chains, while a peripheral stalk is formed by the delta and b chains.

It localises to the cell membrane. Its function is as follows. F(1)F(0) ATP synthase produces ATP from ADP in the presence of a proton or sodium gradient. F-type ATPases consist of two structural domains, F(1) containing the extramembraneous catalytic core and F(0) containing the membrane sodium channel, linked together by a central stalk and a peripheral stalk. During catalysis, ATP synthesis in the catalytic domain of F(1) is coupled via a rotary mechanism of the central stalk subunits to sodium translocation. Functionally, key component of the F(0) channel; it plays a direct role in translocation across the membrane. A homomeric c-ring of between 10-14 subunits forms the central stalk rotor element with the F(1) delta and epsilon subunits. The protein is ATP synthase subunit c, sodium ion specific (atpE) of Propionigenium modestum.